A 344-amino-acid chain; its full sequence is Transcription factor HRS1 (344 aa).

The interval 88-184 (IKDSSTSNEE…DGGGGRKQRR (97 aa)) is disordered. Residues 95-104 (NEEEDEEFDD) show a composition bias toward acidic residues. Basic and acidic residues-rich tracts occupy residues 105–124 (EHGN…KSDW) and 138–178 (LLPK…DGGG). Positions 178 to 238 (GGRKQRRCWS…HLQKYRLHTR (61 aa)) constitute an HTH myb-type domain. Positions 209-234 (PKQIREFMKVDGLTNDEVKSHLQKYR) form a DNA-binding region, H-T-H motif. Low complexity predominate over residues 269-291 (STGKTTGGATTSSTTTTTGIYGT). The disordered stretch occupies residues 269-322 (STGKTTGGATTSSTTTTTGIYGTMAAPPPPQWPSHSNYRPSIIVDEGSGSHSEG).

In terms of tissue distribution, expressed in the root hair region and root hair cells.

It localises to the nucleus. Transcription factor involved in nitrate and phosphate signaling in roots. Integrates nitrate and phosphate starvation responses and adaptation of root architecture depending on nutrient availabilities. Acts downstream of the nitrate sensor and transporter NPF6.3/NRT1.1. Represses primary root development in response to phosphate deficiency conditions, only when nitrate is present. Involved in the modulation of primary root and root hair growth in phosphate-deprived environment. May be required for suppressing abscisic acid (ABA) signaling in germinating embryo axis, which promotes the timely germination of seeds. This is Transcription factor HRS1 from Arabidopsis thaliana (Mouse-ear cress).